The following is a 244-amino-acid chain: 5-oxoprolinase subunit A (244 aa).

It belongs to the LamB/PxpA family. Forms a complex composed of PxpA, PxpB and PxpC.

It carries out the reaction 5-oxo-L-proline + ATP + 2 H2O = L-glutamate + ADP + phosphate + H(+). In terms of biological role, catalyzes the cleavage of 5-oxoproline to form L-glutamate coupled to the hydrolysis of ATP to ADP and inorganic phosphate. The protein is 5-oxoprolinase subunit A of Shigella flexneri.